Here is a 165-residue protein sequence, read N- to C-terminus: Type IV major pilin protein PilE1 (165 aa).

The propeptide at 1 to 7 (MNTLQKG) is leader sequence. Phenylalanine 8 is subject to N-methylphenylalanine. The chain crosses the membrane as a helical span at residues 8–28 (FTLIELMIVIAIVGILAAVAL). Serine 70 is a glycosylation site (O-linked (DADDGlc) serine). Serine 75 carries the O-(2-aminoethylphosphoryl)serine; alternate modification. Serine 75 is modified (O-(2-cholinephosphoryl)serine; alternate). Serine 75 is modified (phosphoserine; alternate). Serine 101 carries the post-translational modification O-(sn-1-glycerophosphoryl)serine; partial. An intrachain disulfide couples cysteine 128 to cysteine 158. Positions 137–153 (DDTVADAKDGKEIDTKH) are enriched in basic and acidic residues. The interval 137 to 165 (DDTVADAKDGKEIDTKHLPSTCRDNFDAK) is disordered.

The protein belongs to the N-Me-Phe pilin family. As to quaternary structure, the pili are polar flexible filaments of about 5.4 nanometers diameter and 2.5 micrometers average length; they consist of only a single polypeptide chain arranged in a helical configuration of five subunits per turn in the assembled pilus. In terms of processing, the O-linked glycan identified as Gal-GlcNAc disaccharide in PubMed:7477282 and PubMed:10048019 is now identified as either a hexosyl-diacetamidotrideoxyhexoside (DATDHex) by mass spectrometry in PubMed:15249686, or alpha-D-galactopyranosyl-(1-&gt;3)-2,4-diacetamido-2,4-dideoxy-beta-D-glucopyranoside (DADDGlc) by X-ray diffraction in PubMed:16949362. It is not clear whether there is a chemical difference in the glycosylation of the two derivatives of strain MS11 used in these experiments, or not. In some MS11 derivative strains, Ser-75 is modified to O-(2-aminoethylphosphoryl)serine, and in some other derivatives that can be secondarily modified to O-(2-cholinephosphoryl)serine by N-methylation.

It localises to the fimbrium. It is found in the membrane. Its function is as follows. Major component of the type IV pilus (T4P) that plays a role in cellular adherence, microcolony formation, resistance to neutrophil mediated killing, twitching motility as well as transformation. Mediates the attachment and the formation of bacterial microcolonies on host epithelial cells. Mechanistically, pili retractation induces host NF-kappa-B activation in infected cells, which is temporally associated with the formation of gonococcal microcolonies. In Neisseria gonorrhoeae, this protein is Type IV major pilin protein PilE1 (pilE1).